The chain runs to 95 residues: Large ribosomal subunit protein uL23 (95 aa).

The protein belongs to the universal ribosomal protein uL23 family. In terms of assembly, part of the 50S ribosomal subunit. Contacts protein L29, and trigger factor when it is bound to the ribosome.

In terms of biological role, one of the early assembly proteins it binds 23S rRNA. One of the proteins that surrounds the polypeptide exit tunnel on the outside of the ribosome. Forms the main docking site for trigger factor binding to the ribosome. This Bacillus subtilis (strain 168) protein is Large ribosomal subunit protein uL23.